The following is a 231-amino-acid chain: Histone H1 (231 aa).

Over residues 1–17 (MSDPAIEVAPVPVASPA) the composition is skewed to low complexity. 2 disordered regions span residues 1–44 (MSDP…PVSD) and 124–231 (TKKV…AKKA). An H15 domain is found at 38–112 (THPPVSDMIV…GASGSFKLPA (75 aa)). Basic residues-rich tracts occupy residues 145-171 (KVKKTIAKKPKVASATKIKKPVAKTTK), 178-213 (PTKKVAAKPKAAPKPKAAPKPKVAKPKKAAAPKAKK), and 221-231 (KAAKKPSAKKA).

This sequence belongs to the histone H1/H5 family.

The protein localises to the nucleus. Its subcellular location is the chromosome. Functionally, histones H1 are necessary for the condensation of nucleosome chains into higher-order structures. The polypeptide is Histone H1 (Chironomus thummi thummi (Midge)).